The chain runs to 280 residues: Retinoschisin (280 aa).

A signal peptide spans 1–23 (MHLPREAFLLALAGAFIFPSSQQ). In terms of domain architecture, F5/8 type C spans 119–275 (CPYHRPLGFE…IALRLELLLC (157 aa)). Disulfide bonds link C119-C275 and C166-C198.

As to quaternary structure, homooctamer of 4 homodimers; disulfide-linked. The homooctamer has a flat, cogwheel structure with a diameter of about 14 nm. Two stacked octamers can assemble to form a hexadecamer.

It localises to the secreted. Its subcellular location is the cell membrane. In terms of biological role, binds negatively charged membrane lipids, such as phosphatidylserine and phosphoinositides. May play a role in cell-cell adhesion processes in the retina, via homomeric interaction between octamers present on the surface of two neighboring cells. Required for normal structure and function of the retina. This is Retinoschisin (xlrs1) from Takifugu rubripes (Japanese pufferfish).